Here is a 271-residue protein sequence, read N- to C-terminus: Phosphonoacetaldehyde hydrolase (271 aa).

The Nucleophile role is filled by Asp-12. Mg(2+)-binding residues include Asp-12 and Ala-14. The active-site Schiff-base intermediate with substrate is Lys-54. Position 188 (Asp-188) interacts with Mg(2+).

It belongs to the HAD-like hydrolase superfamily. PhnX family. As to quaternary structure, homodimer. Mg(2+) serves as cofactor.

It catalyses the reaction phosphonoacetaldehyde + H2O = acetaldehyde + phosphate + H(+). Its function is as follows. Involved in phosphonate degradation. In Vibrio cholerae serotype O1 (strain ATCC 39541 / Classical Ogawa 395 / O395), this protein is Phosphonoacetaldehyde hydrolase.